A 157-amino-acid chain; its full sequence is MKIIGIDPGYGILGYGVLEKSGNKISHITHGVITTDKELSMYKRLQVIYEEFLRLLKEYSPDACAIESLFFYKNVKTAIRVGEARGVILLATSQMDLPLYEFTPYQVKNNITGYGHSDKKQVQKMVKMLLNLDKIPRPDDAADALAVAWCLAVETRF.

Residues aspartate 7, glutamate 67, and aspartate 140 contribute to the active site. Residues aspartate 7, glutamate 67, and aspartate 140 each contribute to the Mg(2+) site.

Belongs to the RuvC family. As to quaternary structure, homodimer which binds Holliday junction (HJ) DNA. The HJ becomes 2-fold symmetrical on binding to RuvC with unstacked arms; it has a different conformation from HJ DNA in complex with RuvA. In the full resolvosome a probable DNA-RuvA(4)-RuvB(12)-RuvC(2) complex forms which resolves the HJ. Requires Mg(2+) as cofactor.

The protein resides in the cytoplasm. The enzyme catalyses Endonucleolytic cleavage at a junction such as a reciprocal single-stranded crossover between two homologous DNA duplexes (Holliday junction).. The RuvA-RuvB-RuvC complex processes Holliday junction (HJ) DNA during genetic recombination and DNA repair. Endonuclease that resolves HJ intermediates. Cleaves cruciform DNA by making single-stranded nicks across the HJ at symmetrical positions within the homologous arms, yielding a 5'-phosphate and a 3'-hydroxyl group; requires a central core of homology in the junction. The consensus cleavage sequence is 5'-(A/T)TT(C/G)-3'. Cleavage occurs on the 3'-side of the TT dinucleotide at the point of strand exchange. HJ branch migration catalyzed by RuvA-RuvB allows RuvC to scan DNA until it finds its consensus sequence, where it cleaves and resolves the cruciform DNA. The polypeptide is Crossover junction endodeoxyribonuclease RuvC (Thermosipho melanesiensis (strain DSM 12029 / CIP 104789 / BI429)).